The primary structure comprises 264 residues: S-methyl-5'-thioadenosine phosphorylase (264 aa).

Phosphate is bound by residues Ser14 and 55–56 (RH). Met180 is a substrate binding site. Thr181 is a phosphate binding site. 204–206 (DVD) contacts substrate.

This sequence belongs to the PNP/MTAP phosphorylase family. MTAP subfamily. Homodimer.

It catalyses the reaction S-methyl-5'-thioadenosine + phosphate = 5-(methylsulfanyl)-alpha-D-ribose 1-phosphate + adenine. It participates in amino-acid biosynthesis; L-methionine biosynthesis via salvage pathway; S-methyl-5-thio-alpha-D-ribose 1-phosphate from S-methyl-5'-thioadenosine (phosphorylase route): step 1/1. Not inhibited by adenosine, potently inhibited by MT-DADMe-immucillin A. In terms of biological role, catalyzes the reversible phosphorylation of S-methyl-5'-thioadenosine (MTA) to adenine and 5-methylthioribose-1-phosphate. Involved in the breakdown of MTA, a major by-product of polyamine biosynthesis. Responsible for the first step in the methionine salvage pathway after MTA has been generated from S-adenosylmethionine. Prefers MTA, with 2% activity on adenosine, 0.8% activity on S-adenosyl-L-homocysteine and no activity on other tested nucleosides. This chain is S-methyl-5'-thioadenosine phosphorylase, found in Mycobacterium tuberculosis (strain ATCC 25618 / H37Rv).